A 511-amino-acid polypeptide reads, in one-letter code: ATP synthase subunit alpha (511 aa).

Position 169–176 (169–176 (GDRQTGKT)) interacts with ATP.

It belongs to the ATPase alpha/beta chains family. F-type ATPases have 2 components, CF(1) - the catalytic core - and CF(0) - the membrane proton channel. CF(1) has five subunits: alpha(3), beta(3), gamma(1), delta(1), epsilon(1). CF(0) has three main subunits: a(1), b(2) and c(9-12). The alpha and beta chains form an alternating ring which encloses part of the gamma chain. CF(1) is attached to CF(0) by a central stalk formed by the gamma and epsilon chains, while a peripheral stalk is formed by the delta and b chains.

The protein localises to the cell inner membrane. It carries out the reaction ATP + H2O + 4 H(+)(in) = ADP + phosphate + 5 H(+)(out). Produces ATP from ADP in the presence of a proton gradient across the membrane. The alpha chain is a regulatory subunit. This is ATP synthase subunit alpha from Bartonella henselae (strain ATCC 49882 / DSM 28221 / CCUG 30454 / Houston 1) (Rochalimaea henselae).